A 151-amino-acid polypeptide reads, in one-letter code: Type 4 adapter protein IcmW (151 aa).

In terms of assembly, the T4BSS is a complex nanomachine composed of several subcomplexes. This subunit is part of the Type IV Coupling Complex (T4CC), a subcomplex composed of the DotLMNYZ core and the IcmSW-LvgA adapter subunits, linked by the C-terminal tail of DotL. Interacts with IcmS. IcmS and IcmW form a stable complex. Interaction with IcmS greatly enhances the stability of IcmW. Interacts directly with the type 4 coupling protein DotL. Interacts with LvgA. Interacts with effector proteins.

The protein localises to the cytoplasm. With respect to regulation, interaction with DotL is critical for the export of IcmSW-dependent substrates. Its function is as follows. Component of the Dot/Icm type IVB secretion system (T4BSS), which is used to inject bacterial effector proteins into eukaryotic host cells. Part of a subcomplex which recruits effector proteins and delivers them to the core transmembrane subcomplex. The IcmS/IcmW protein complex plays an important role in protein translocation by interacting with multiple Dot/Icm effector proteins to facilitate their translocation into host cells. Interaction promotes conformational changes in the effector protein, which may facilitate display of a C-terminal translocation signal. May maintain the substrates in a translocation competent form. Required for intracellular growth in host cells, replicative phagosome formation and phagosome trafficking. The polypeptide is Type 4 adapter protein IcmW (Legionella pneumophila subsp. pneumophila (strain Philadelphia 1 / ATCC 33152 / DSM 7513)).